Here is a 410-residue protein sequence, read N- to C-terminus: Translation initiation factor 2 subunit gamma (410 aa).

Residues 9 to 202 (QAEVNIGMVG…AIEEFIPTPK (194 aa)) form the tr-type G domain. The G1 stretch occupies residues 18–25 (GHVDHGKT). 4 residues coordinate Mg(2+): aspartate 21, threonine 25, glycine 46, and threonine 48. 21–26 (DHGKTT) contacts GTP. Residues 46 to 50 (GITIK) are G2. Cysteine 61, cysteine 64, cysteine 73, and cysteine 76 together coordinate Zn(2+). The segment at 90–93 (DAPG) is G3. GTP contacts are provided by residues 145 to 148 (NKIE) and 180 to 182 (SAL). Residues 145–148 (NKIE) form a G4 region. The tract at residues 180–182 (SAL) is G5.

It belongs to the TRAFAC class translation factor GTPase superfamily. Classic translation factor GTPase family. EIF2G subfamily. As to quaternary structure, heterotrimer composed of an alpha, a beta and a gamma chain. Mg(2+) serves as cofactor.

The catalysed reaction is GTP + H2O = GDP + phosphate + H(+). Its function is as follows. eIF-2 functions in the early steps of protein synthesis by forming a ternary complex with GTP and initiator tRNA. In Thermococcus kodakarensis (strain ATCC BAA-918 / JCM 12380 / KOD1) (Pyrococcus kodakaraensis (strain KOD1)), this protein is Translation initiation factor 2 subunit gamma.